The following is a 101-amino-acid chain: Urease subunit beta (101 aa).

It belongs to the urease beta subunit family. Heterotrimer of UreA (gamma), UreB (beta) and UreC (alpha) subunits. Three heterotrimers associate to form the active enzyme.

The protein resides in the cytoplasm. The enzyme catalyses urea + 2 H2O + H(+) = hydrogencarbonate + 2 NH4(+). Its pathway is nitrogen metabolism; urea degradation; CO(2) and NH(3) from urea (urease route): step 1/1. In Haemophilus influenzae (strain 86-028NP), this protein is Urease subunit beta.